Here is a 149-residue protein sequence, read N- to C-terminus: Large ribosomal subunit protein bL9 (149 aa).

Belongs to the bacterial ribosomal protein bL9 family.

Its function is as follows. Binds to the 23S rRNA. This chain is Large ribosomal subunit protein bL9, found in Legionella pneumophila (strain Lens).